We begin with the raw amino-acid sequence, 705 residues long: FAD-dependent monooxygenase ATEG_03635 (705 aa).

FAD contacts are provided by residues 86 to 115 (DVLI…IVDK), Val-208, 308 to 310 (RFY), and Ser-408.

The protein belongs to the PheA/TfdB FAD monooxygenase family. The cofactor is FAD.

It functions in the pathway secondary metabolite biosynthesis. Its function is as follows. FAD-dependent monooxygenase; part of the cluster A that mediates the biosynthesis of azasperpyranones, members of the azaphilone family that exhibit anti-cancer activities. Azasperpyranones are synthesized by 2 clusters, A and B. Cluster A is responsible for the production of the polyhydric phenol moiety while the azaphilonoid scaffold is produced by the cluster B. The non-reducing polyketide synthase ATEG_03629 produces 5-methyl orsellinic acid, which is then reduced to 5-methyl orsellinic aldehyde by the NRPS-like protein ATEG_03630. 5-methyl orsellinic aldehyde is then first hydroxylated by the FAD-dependent monooxygenase ATEG_03635 and subsequently hydroxylated by the cytochrome P450 monooxygenase ATEG_03631 to produce the unstable polyhydric phenol precursor of azasperpyranones. On the other hand, the polyketide synthase ATEG_07659 is responsible for producing the 3,5-dimethyloctadienone moiety from acetyl-CoA, three malonyl-CoA, and two S-adenosyl methionines (SAM). The 3,5-dimethyloctadienone moiety is then loaded onto the SAT domain of ATEG_07661 and extended with four malonyl-CoA and one SAM, which leads to the formation of 2,4-dihydroxy-6-(5,7-dimethyl-2-oxo-trans-3-trans-5-nonadienyl)-3-methylbenzaldehyde (compound 8) after reductive release and aldol condensation. The FAD-dependent monooxygenase ATEG_07662 is the next enzyme in the biosynthesis sequence and hydroxylates the side chain at the benzylic position of compound 8. In Aspergillus nidulans, afoF, the ortholog of the FAD-dependent oxygenase ATEG_07660, is the key enzyme for the biosynthesis of asperfuranone by catalyzing the hydroxylation at C-8 of to prevent the formation of a six-membered ring hemiacetal intermediate and thus facilitating the formation of a five-membered ring to produce asperfuranone. In Aspergillus terreus, ATEG_07660 is probably not functional, which leads to the formation of the six-membered ring hemiacetal intermediate presperpyranone instead of asperfuranone. Finally, ATEG_03636 is involved in the condensation of the polyhydric phenol moiety produced by cluster A and the perasperpyranone precursor produced by cluster B, to yield azasperpyranone A. Further modifications of azasperpyranone A result in the production of derivatives, including azasperpyranone B to F. This chain is FAD-dependent monooxygenase ATEG_03635, found in Aspergillus terreus (strain NIH 2624 / FGSC A1156).